The primary structure comprises 43 residues: METATIFSIFFSCLLIGLTGYSLYTSFGNASSELRDPFEEHED.

A helical transmembrane segment spans residues 5-27; it reads TIFSIFFSCLLIGLTGYSLYTSF.

It belongs to the PsbN family.

Its subcellular location is the plastid. The protein resides in the chloroplast thylakoid membrane. May play a role in photosystem I and II biogenesis. This is Protein PsbN from Mesostigma viride (Green alga).